The primary structure comprises 103 residues: Carboxysome shell protein CcmK3 (103 aa).

The BMC domain occupies Ala-4 to Pro-91.

This sequence belongs to the bacterial microcompartments protein family. CcmK subfamily. As to quaternary structure, forms mixed heterohexamers with CcmK4, probably with 1:5 CcmK3:CcmK4 stoichiometry. Only very weak interactions with CcmK1 and CcmK2 were seen. Bulky residues in the pore region probably preclude the formation of homohexamers by this subunit.

Its subcellular location is the carboxysome. Its function is as follows. A probably minor shell protein component of the carboxysome, a polyhedral inclusion where RuBisCO (ribulose bisphosphate carboxylase, rbcL-rbcS) is sequestered. This subunit probably does not form homohexamers. The chain is Carboxysome shell protein CcmK3 from Synechocystis sp. (strain ATCC 27184 / PCC 6803 / Kazusa).